We begin with the raw amino-acid sequence, 226 residues long: Putative ABC transporter ATP-binding protein DR_2469 (226 aa).

Positions 2–225 (IELRHVSHHY…LRVYRERMTW (224 aa)) constitute an ABC transporter domain. 33–40 (GSNGSGKS) provides a ligand contact to ATP.

It belongs to the ABC transporter superfamily.

The protein localises to the cell membrane. In terms of biological role, probably part of an ABC transporter complex. Responsible for energy coupling to the transport system. The sequence is that of Putative ABC transporter ATP-binding protein DR_2469 from Deinococcus radiodurans (strain ATCC 13939 / DSM 20539 / JCM 16871 / CCUG 27074 / LMG 4051 / NBRC 15346 / NCIMB 9279 / VKM B-1422 / R1).